Consider the following 338-residue polypeptide: E3 ubiquitin-protein ligase RING1 (338 aa).

Residues 102 to 124 (TTTSSSASIDPNNPSLSGPTRSG) form a disordered region. Residues 110–121 (IDPNNPSLSGPT) show a composition bias toward polar residues. An RING-type; atypical zinc finger spans residues 224 to 265 (CAVCMDDFEEGTEAKQMPCKHLYHKDCLLPWLELHNSCPVCR). 2 stretches are compositionally biased toward basic and acidic residues: residues 267–279 (ELPT…ERRV) and 298–309 (SDGDNRTVERSF). Residues 267–338 (ELPTDDPDYE…NAETRQEDLD (72 aa)) are disordered.

Auto-ubiquitinated as part of the enzymatic reaction. As to expression, mostly expressed in cotton fibers, and, to a lower extent, in leaves and flowers.

The catalysed reaction is S-ubiquitinyl-[E2 ubiquitin-conjugating enzyme]-L-cysteine + [acceptor protein]-L-lysine = [E2 ubiquitin-conjugating enzyme]-L-cysteine + N(6)-ubiquitinyl-[acceptor protein]-L-lysine.. It functions in the pathway protein modification; protein ubiquitination. Its function is as follows. E3 ubiquitin-protein ligase which accepts ubiquitin from an E2 ubiquitin-conjugating enzyme in the form of a thioester and then directly transfers the ubiquitin to targeted substrates. Promotes polyubiquitination of target proteins. The protein is E3 ubiquitin-protein ligase RING1 (RING1) of Gossypium hirsutum (Upland cotton).